The chain runs to 208 residues: MIVIIDYDTGNTKSISKALDFIGLQNKISSDATEISQADGVILPGVGAYPEAMKELTRRGLDKTLKEIAATGKPILGVCLGMQLLLESSNEHSFTSGLGLIPGHVEKLPEEPEFAVPHMGWNQLQIKRATPLTKQLDGEYVYYVHSYYANCPEEYIIATSGYSIEVPGMINNGNIYGAQFHPEKSGQIGLEILKGFKEVTYSCKSSQQ.

A Glutamine amidotransferase type-1 domain is found at 1-206 (MIVIIDYDTG…KEVTYSCKSS (206 aa)). The active-site Nucleophile is the Cys-79. Active-site residues include His-181 and Glu-183.

Heterodimer of HisH and HisF.

The protein resides in the cytoplasm. It catalyses the reaction 5-[(5-phospho-1-deoxy-D-ribulos-1-ylimino)methylamino]-1-(5-phospho-beta-D-ribosyl)imidazole-4-carboxamide + L-glutamine = D-erythro-1-(imidazol-4-yl)glycerol 3-phosphate + 5-amino-1-(5-phospho-beta-D-ribosyl)imidazole-4-carboxamide + L-glutamate + H(+). The enzyme catalyses L-glutamine + H2O = L-glutamate + NH4(+). It participates in amino-acid biosynthesis; L-histidine biosynthesis; L-histidine from 5-phospho-alpha-D-ribose 1-diphosphate: step 5/9. Its function is as follows. IGPS catalyzes the conversion of PRFAR and glutamine to IGP, AICAR and glutamate. The HisH subunit catalyzes the hydrolysis of glutamine to glutamate and ammonia as part of the synthesis of IGP and AICAR. The resulting ammonia molecule is channeled to the active site of HisF. The protein is Imidazole glycerol phosphate synthase subunit HisH of Listeria monocytogenes serotype 4a (strain HCC23).